A 453-amino-acid polypeptide reads, in one-letter code: Bifunctional protein GlmU (453 aa).

A pyrophosphorylase region spans residues 1–225 (MNIVILAAGT…EWETLGVNSK (225 aa)). Residues 6–9 (LAAG), Lys-20, Gln-71, 76–77 (GT), 98–100 (YGD), Gly-135, Glu-150, Asn-165, and Asn-223 contribute to the UDP-N-acetyl-alpha-D-glucosamine site. Asp-100 serves as a coordination point for Mg(2+). Mg(2+) is bound at residue Asn-223. Positions 226–246 (AQLAELERIHQRNIAEALLVD) are linker. An N-acetyltransferase region spans residues 247-453 (GVTLADPARL…GYVRPVKKKS (207 aa)). 2 residues coordinate UDP-N-acetyl-alpha-D-glucosamine: Arg-329 and Lys-347. Residue His-359 is the Proton acceptor of the active site. Tyr-362 and Asn-373 together coordinate UDP-N-acetyl-alpha-D-glucosamine. Residues Ala-376, 382–383 (NY), Ser-401, and Ala-419 each bind acetyl-CoA.

It in the N-terminal section; belongs to the N-acetylglucosamine-1-phosphate uridyltransferase family. This sequence in the C-terminal section; belongs to the transferase hexapeptide repeat family. In terms of assembly, homotrimer. It depends on Mg(2+) as a cofactor.

It is found in the cytoplasm. The catalysed reaction is alpha-D-glucosamine 1-phosphate + acetyl-CoA = N-acetyl-alpha-D-glucosamine 1-phosphate + CoA + H(+). It carries out the reaction N-acetyl-alpha-D-glucosamine 1-phosphate + UTP + H(+) = UDP-N-acetyl-alpha-D-glucosamine + diphosphate. It participates in nucleotide-sugar biosynthesis; UDP-N-acetyl-alpha-D-glucosamine biosynthesis; N-acetyl-alpha-D-glucosamine 1-phosphate from alpha-D-glucosamine 6-phosphate (route II): step 2/2. It functions in the pathway nucleotide-sugar biosynthesis; UDP-N-acetyl-alpha-D-glucosamine biosynthesis; UDP-N-acetyl-alpha-D-glucosamine from N-acetyl-alpha-D-glucosamine 1-phosphate: step 1/1. The protein operates within bacterial outer membrane biogenesis; LPS lipid A biosynthesis. Functionally, catalyzes the last two sequential reactions in the de novo biosynthetic pathway for UDP-N-acetylglucosamine (UDP-GlcNAc). The C-terminal domain catalyzes the transfer of acetyl group from acetyl coenzyme A to glucosamine-1-phosphate (GlcN-1-P) to produce N-acetylglucosamine-1-phosphate (GlcNAc-1-P), which is converted into UDP-GlcNAc by the transfer of uridine 5-monophosphate (from uridine 5-triphosphate), a reaction catalyzed by the N-terminal domain. The protein is Bifunctional protein GlmU of Burkholderia lata (strain ATCC 17760 / DSM 23089 / LMG 22485 / NCIMB 9086 / R18194 / 383).